Reading from the N-terminus, the 103-residue chain is Large ribosomal subunit protein bL21 (103 aa).

This sequence belongs to the bacterial ribosomal protein bL21 family. In terms of assembly, part of the 50S ribosomal subunit. Contacts protein L20.

This protein binds to 23S rRNA in the presence of protein L20. In Paracidovorax citrulli (strain AAC00-1) (Acidovorax citrulli), this protein is Large ribosomal subunit protein bL21.